Consider the following 99-residue polypeptide: Large ribosomal subunit protein eL21 (99 aa).

It belongs to the eukaryotic ribosomal protein eL21 family.

In Methanocella arvoryzae (strain DSM 22066 / NBRC 105507 / MRE50), this protein is Large ribosomal subunit protein eL21.